Consider the following 233-residue polypeptide: MPKRGKKYLEALKLVDRSKAYPIAEAIELVKKTNVAKFDATVEVAFRLGVDPKKADQQIRGAVVLPHGTGKVARVLVFAKGEKAKEAEAAGADYVGDTEYINKIQQGWFDFDVVVATPDMMGEVGKLGRILGPKGLMPDPKTGTVTFDVAKAVQEIKAGKVEYRVDKAGNIHVPIGKVSFDNEKLAENFAAVYEALIKAKPAAAKGTYVKNVTITSTMGPGIKVDPTTVAVAQ.

The protein belongs to the universal ribosomal protein uL1 family. As to quaternary structure, part of the 50S ribosomal subunit.

Its function is as follows. Binds directly to 23S rRNA. The L1 stalk is quite mobile in the ribosome, and is involved in E site tRNA release. Functionally, protein L1 is also a translational repressor protein, it controls the translation of the L11 operon by binding to its mRNA. The sequence is that of Large ribosomal subunit protein uL1 from Geobacillus stearothermophilus (Bacillus stearothermophilus).